The primary structure comprises 434 residues: Mannose-6-phosphate isomerase (434 aa).

Zn(2+) is bound by residues Q109, H111, and E136. Residues 181-191 (SLGLPTSQPPD) show a composition bias toward polar residues. The disordered stretch occupies residues 181–200 (SLGLPTSQPPDTSLFKPTES). Zn(2+) is bound at residue H291. Residue R310 is part of the active site.

This sequence belongs to the mannose-6-phosphate isomerase type 1 family. The cofactor is Zn(2+).

The protein localises to the cytoplasm. It carries out the reaction D-mannose 6-phosphate = D-fructose 6-phosphate. The protein operates within nucleotide-sugar biosynthesis; GDP-alpha-D-mannose biosynthesis; alpha-D-mannose 1-phosphate from D-fructose 6-phosphate: step 1/2. Involved in the synthesis of the GDP-mannose and dolichol-phosphate-mannose required for a number of critical mannosyl transfer reactions. The polypeptide is Mannose-6-phosphate isomerase (MAN1) (Cryptococcus neoformans var. neoformans serotype D (strain JEC21 / ATCC MYA-565) (Filobasidiella neoformans)).